Consider the following 251-residue polypeptide: 3-deoxy-manno-octulosonate cytidylyltransferase (251 aa).

The protein belongs to the KdsB family.

It localises to the cytoplasm. The enzyme catalyses 3-deoxy-alpha-D-manno-oct-2-ulosonate + CTP = CMP-3-deoxy-beta-D-manno-octulosonate + diphosphate. It functions in the pathway nucleotide-sugar biosynthesis; CMP-3-deoxy-D-manno-octulosonate biosynthesis; CMP-3-deoxy-D-manno-octulosonate from 3-deoxy-D-manno-octulosonate and CTP: step 1/1. It participates in bacterial outer membrane biogenesis; lipopolysaccharide biosynthesis. Functionally, activates KDO (a required 8-carbon sugar) for incorporation into bacterial lipopolysaccharide in Gram-negative bacteria. The protein is 3-deoxy-manno-octulosonate cytidylyltransferase of Rhizobium johnstonii (strain DSM 114642 / LMG 32736 / 3841) (Rhizobium leguminosarum bv. viciae).